A 607-amino-acid polypeptide reads, in one-letter code: Serum albumin (607 aa).

A signal peptide spans 1-16 (MKWTILTALLIISAES). Positions 17–20 (KNLY) are excised as a propeptide. Albumin domains are found at residues 19-209 (LYKR…TQLK), 210-401 (KALH…HVLA), and 403-600 (AIKE…ILIE). H27 is a Cu cation binding site. 17 disulfide bridges follow: C77–C86, C99–C115, C114–C125, C147–C192, C191–C200, C223–C269, C268–C276, C288–C302, C301–C312, C339–C384, C383–C392, C415–C461, C460–C471, C484–C500, C499–C510, C537–C582, and C581–C590. Residues H270 and D272 each coordinate Zn(2+). Ca(2+) is bound by residues D272 and E275.

It belongs to the ALB/AFP/VDB family. Plasma. In the skin, widely distributed around the membranes of epithelial layer cells and within the stratum spongiosum of the dermis (at protein level).

The protein resides in the secreted. Serum albumin, the main protein of plasma, has a good binding capacity for water, Ca(2+), Na(+), K(+), fatty acids, hormones, bilirubin and drugs. Its main function is the regulation of the colloidal osmotic pressure of blood. Potent inhibitor of trypsin but has no inhibitory effect on thrombin, chymotrypsin, elastase and subtilisin. This is Serum albumin from Bombina maxima (Giant fire-bellied toad).